Here is a 947-residue protein sequence, read N- to C-terminus: DEAD-box ATP-dependent RNA helicase 45 (947 aa).

Residues 1-14 are compositionally biased toward acidic residues; that stretch reads MEEEEVVVVVDEEE. 2 disordered regions span residues 1-132 and 159-221; these read MEEE…EDEI and SMPA…EEFM. Basic and acidic residues-rich tracts occupy residues 15–31 and 42–61; these read SERR…KRLD and KEWQ…REQE. The span at 62–82 shows a compositional bias: low complexity; it reads AAAGAGTPAAAAGADGDSNAG. 2 stretches are compositionally biased toward acidic residues: residues 88-108 and 196-219; these read DGEE…EDDG and DDSD…DDEE. A Q motif motif is present at residues 285 to 313; it reads KTWVQSGLTSKLLDTIKKLGFEKPMPIQA. Positions 316–494 constitute a Helicase ATP-binding domain; that stretch reads LPIIMSGRDC…RKVLTKPVEI (179 aa). 329-336 lines the ATP pocket; sequence AKTGSGKT. A DEAD box motif is present at residues 442–445; it reads DEAD. The Helicase C-terminal domain maps to 479 to 647; sequence QVEILARKVL…AVPQDLKGLA (169 aa). Residues 658 to 710 are disordered; sequence TEQAHGTGYGGSGFKFNEEEDEARRSAKKAQAREYGYEEDKSDSDSDEEGGVR. Over residues 697-706 the composition is skewed to acidic residues; the sequence is DKSDSDSDEE. The stretch at 854–879 forms a coiled coil; it reads TELSVKKAKSELKRVLEDCANHALNL.

It belongs to the DEAD box helicase family. DDX46/PRP5 subfamily.

It catalyses the reaction ATP + H2O = ADP + phosphate + H(+). In Oryza sativa subsp. japonica (Rice), this protein is DEAD-box ATP-dependent RNA helicase 45.